A 339-amino-acid polypeptide reads, in one-letter code: tRNA N6-adenosine threonylcarbamoyltransferase (339 aa).

The Fe cation site is built by histidine 115 and histidine 119. Residues 136–140 (LISGG), aspartate 168, glutamate 185, and serine 265 contribute to the substrate site. Position 293 (aspartate 293) interacts with Fe cation.

It belongs to the KAE1 / TsaD family. Fe(2+) serves as cofactor.

It is found in the cytoplasm. It catalyses the reaction L-threonylcarbamoyladenylate + adenosine(37) in tRNA = N(6)-L-threonylcarbamoyladenosine(37) in tRNA + AMP + H(+). Functionally, required for the formation of a threonylcarbamoyl group on adenosine at position 37 (t(6)A37) in tRNAs that read codons beginning with adenine. Is probably involved in the transfer of the threonylcarbamoyl moiety of threonylcarbamoyl-AMP (TC-AMP) to the N6 group of A37. This chain is tRNA N6-adenosine threonylcarbamoyltransferase, found in Pyrobaculum calidifontis (strain DSM 21063 / JCM 11548 / VA1).